We begin with the raw amino-acid sequence, 670 residues long: MGEPEKRAGTHGIRCFAKIKVFLLALTWAYASKALSATYMNSMLTQIERRFNISTSIVGLINGSFEVGNLLLIIFVSYFGRKRHRPIMIGIGCAVMGLGCFIISLPHFLMGRYEYETTISPTSNLSSNSFLCMENRTQTLKPTQDPAECVKEMKSLMWIYVLVGNIIRGIGETPIMPLGISYIEDFAKSENSPFYIGILEVGKITGPIAAIWLGSFCATIYVDMGSVNTDDLTITPTDTRCVGAWWIGFLVCAGLNILISIPFFFFPKTFPKEGPEDMANETKNDEGDKHREKAKEEKRGITKDFFLFMKSLSCNPIYMLCVLTSVLQVNGFVSIFTFKPKYLEHHYGKSSSEAIFLMGLYTLPSVCVGYLISGFIMKKFKITLKKAAFISYCLGMSECLLSLCNFMLTCDNVPIAGLTTSYEGIQQSFDMENTVLADCNTRCSCLTKTWDPVCGDNGLAYITPCLAGCEKSVGSGINMVLQDCSCIQSSGNSSAVLGLCNKGPDCANKLQYFLIITVFCSFFYSLSLIPGYMIFLRCMKSEEKSLGIGLQAFCMRILGGILAPIYFGVLIDRTCLHWGTQKCGEPGACRTYEINSFRSIYLGLPAALRGSSYLPAFFILRLMRKFQFPGDINSPVTDHVEMMLTEKESEHTDVHRSPQVENDGELKTKL.

The Cytoplasmic segment spans residues 1 to 20 (MGEPEKRAGTHGIRCFAKIK). Residues 21–40 (VFLLALTWAYASKALSATYM) traverse the membrane as a helical segment. The Extracellular segment spans residues 41-59 (NSMLTQIERRFNISTSIVG). Asparagine 52 is a glycosylation site (N-linked (GlcNAc...) asparagine). Residues 60-80 (LINGSFEVGNLLLIIFVSYFG) form a helical membrane-spanning segment. At 81–86 (RKRHRP) the chain is on the cytoplasmic side. The helical transmembrane segment at 87–111 (IMIGIGCAVMGLGCFIISLPHFLMG) threads the bilayer. The Extracellular segment spans residues 112 to 155 (RYEYETTISPTSNLSSNSFLCMENRTQTLKPTQDPAECVKEMKS). N-linked (GlcNAc...) asparagine glycosylation is found at asparagine 124 and asparagine 135. The helical transmembrane segment at 156 to 184 (LMWIYVLVGNIIRGIGETPIMPLGISYIE) threads the bilayer. Residues 185 to 203 (DFAKSENSPFYIGILEVGK) are Cytoplasmic-facing. A helical membrane pass occupies residues 204–224 (ITGPIAAIWLGSFCATIYVDM). Residues 225–242 (GSVNTDDLTITPTDTRCV) are Extracellular-facing. The chain crosses the membrane as a helical span at residues 243–267 (GAWWIGFLVCAGLNILISIPFFFFP). Residues 268-311 (KTFPKEGPEDMANETKNDEGDKHREKAKEEKRGITKDFFLFMKS) are Cytoplasmic-facing. The segment at 276–295 (EDMANETKNDEGDKHREKAK) is disordered. A helical membrane pass occupies residues 312 to 333 (LSCNPIYMLCVLTSVLQVNGFV). The Extracellular portion of the chain corresponds to 334-353 (SIFTFKPKYLEHHYGKSSSE). A helical membrane pass occupies residues 354–377 (AIFLMGLYTLPSVCVGYLISGFIM). The Cytoplasmic segment spans residues 378–381 (KKFK). A helical transmembrane segment spans residues 382–405 (ITLKKAAFISYCLGMSECLLSLCN). The Extracellular segment spans residues 406–513 (FMLTCDNVPI…PDCANKLQYF (108 aa)). The region spanning 433–488 (NTVLADCNTRCSCLTKTWDPVCGDNGLAYITPCLAGCEKSVGSGINMVLQDCSCIQ) is the Kazal-like domain. 3 cysteine pairs are disulfide-bonded: cysteine 439–cysteine 469, cysteine 445–cysteine 465, and cysteine 454–cysteine 486. A glycan (N-linked (GlcNAc...) asparagine) is linked at asparagine 492. Residues 514–536 (LIITVFCSFFYSLSLIPGYMIFL) traverse the membrane as a helical segment. Residues 537–545 (RCMKSEEKS) are Cytoplasmic-facing. The chain crosses the membrane as a helical span at residues 546–571 (LGIGLQAFCMRILGGILAPIYFGVLI). The Extracellular portion of the chain corresponds to 572 to 605 (DRTCLHWGTQKCGEPGACRTYEINSFRSIYLGLP). Residues 606–623 (AALRGSSYLPAFFILRLM) traverse the membrane as a helical segment. Topologically, residues 624–670 (RKFQFPGDINSPVTDHVEMMLTEKESEHTDVHRSPQVENDGELKTKL) are cytoplasmic. Serine 634 is modified (phosphoserine). Residues 647 to 670 (KESEHTDVHRSPQVENDGELKTKL) are disordered.

This sequence belongs to the organo anion transporter (TC 2.A.60) family.

The protein resides in the cell membrane. In terms of biological role, may mediate the Na(+)-independent transport of organic anions. In Rattus norvegicus (Rat), this protein is Solute carrier organic anion transporter family member 1A6 (Slco1a6).